A 260-amino-acid polypeptide reads, in one-letter code: Hydroxyethylthiazole kinase 1 (260 aa).

Met39 provides a ligand contact to substrate. Arg115 and Thr160 together coordinate ATP. Substrate is bound at residue Gly187.

The protein belongs to the Thz kinase family. The cofactor is Mg(2+).

It catalyses the reaction 5-(2-hydroxyethyl)-4-methylthiazole + ATP = 4-methyl-5-(2-phosphooxyethyl)-thiazole + ADP + H(+). Its pathway is cofactor biosynthesis; thiamine diphosphate biosynthesis; 4-methyl-5-(2-phosphoethyl)-thiazole from 5-(2-hydroxyethyl)-4-methylthiazole: step 1/1. Its function is as follows. Catalyzes the phosphorylation of the hydroxyl group of 4-methyl-5-beta-hydroxyethylthiazole (THZ). The chain is Hydroxyethylthiazole kinase 1 from Streptococcus pneumoniae (strain P1031).